A 117-amino-acid polypeptide reads, in one-letter code: Ig heavy chain V region UPC10 (117 aa).

The Ig-like domain occupies 1–116 (EVKLLESGGG…WGQVTTLTVS (116 aa)).

This chain is Ig heavy chain V region UPC10, found in Mus musculus (Mouse).